The chain runs to 393 residues: O-phospho-L-seryl-tRNA:Cys-tRNA synthase 1 (393 aa).

Pyridoxal 5'-phosphate contacts are provided by residues 85 to 86 (AR), N190, and 213 to 215 (SGH). The residue at position 216 (K216) is an N6-(pyridoxal phosphate)lysine.

This sequence belongs to the SepCysS family. In terms of assembly, homodimer. Interacts with SepRS. Requires pyridoxal 5'-phosphate as cofactor.

The enzyme catalyses O-phospho-L-seryl-tRNA(Cys) + hydrogen sulfide + H(+) = L-cysteinyl-tRNA(Cys) + phosphate. In terms of biological role, converts O-phospho-L-seryl-tRNA(Cys) (Sep-tRNA(Cys)) to L-cysteinyl-tRNA(Cys) (Cys-tRNA(Cys)). This chain is O-phospho-L-seryl-tRNA:Cys-tRNA synthase 1, found in Methanospirillum hungatei JF-1 (strain ATCC 27890 / DSM 864 / NBRC 100397 / JF-1).